Here is a 645-residue protein sequence, read N- to C-terminus: Threonine--tRNA ligase (645 aa).

In terms of domain architecture, TGS spans 1-63 (MNQINIQFPD…EQDGAIEIIT (63 aa)). Residues 242–540 (DHRKIGKDLE…LTEETKGAFP (299 aa)) form a catalytic region. Residues C336, H387, and H517 each contribute to the Zn(2+) site.

The protein belongs to the class-II aminoacyl-tRNA synthetase family. As to quaternary structure, homodimer. The cofactor is Zn(2+).

The protein resides in the cytoplasm. It carries out the reaction tRNA(Thr) + L-threonine + ATP = L-threonyl-tRNA(Thr) + AMP + diphosphate + H(+). In terms of biological role, catalyzes the attachment of threonine to tRNA(Thr) in a two-step reaction: L-threonine is first activated by ATP to form Thr-AMP and then transferred to the acceptor end of tRNA(Thr). Also edits incorrectly charged L-seryl-tRNA(Thr). This chain is Threonine--tRNA ligase, found in Staphylococcus epidermidis (strain ATCC 35984 / DSM 28319 / BCRC 17069 / CCUG 31568 / BM 3577 / RP62A).